Consider the following 369-residue polypeptide: tRNA(Met) cytidine acetate ligase (369 aa).

ATP is bound by residues 7-20, Gly-96, Asn-152, and Arg-175; that span reads VAEF…HKYL.

This sequence belongs to the TmcAL family.

It is found in the cytoplasm. It carries out the reaction cytidine(34) in elongator tRNA(Met) + acetate + ATP = N(4)-acetylcytidine(34) in elongator tRNA(Met) + AMP + diphosphate. Catalyzes the formation of N(4)-acetylcytidine (ac(4)C) at the wobble position of elongator tRNA(Met), using acetate and ATP as substrates. First activates an acetate ion to form acetyladenylate (Ac-AMP) and then transfers the acetyl group to tRNA to form ac(4)C34. The polypeptide is tRNA(Met) cytidine acetate ligase (Streptococcus agalactiae serotype Ia (strain ATCC 27591 / A909 / CDC SS700)).